The chain runs to 235 residues: UPF0758 protein COPRO5265_1522 (235 aa).

Positions 109 to 235 constitute an MPN domain; it reads RITTPEDAIE…HVSLAREKLI (127 aa). Zn(2+) contacts are provided by histidine 184, histidine 186, and aspartate 197. The JAMM motif motif lies at 184–197; the sequence is HNHPSGDPSPSRED.

It belongs to the UPF0758 family.

The chain is UPF0758 protein COPRO5265_1522 from Coprothermobacter proteolyticus (strain ATCC 35245 / DSM 5265 / OCM 4 / BT).